The chain runs to 178 residues: uncharacterized protein (178 aa).

Positions 152 to 178 (KKLKGAEPKEHQAPNFEPPTEIFPESN) are disordered.

The protein belongs to the EUO family.

This is an uncharacterized protein from Chlamydia pneumoniae (Chlamydophila pneumoniae).